A 252-amino-acid chain; its full sequence is MLAKRIIPCLDVDKGRVVKGVNFVNLIDAGDPVEIASVYDKEGADELVFLDITASSEDRNIILDVVKKTAETVFMPLTVGGGVRSLEDIRKLLENGADKVSINTAAVKNPSLVENAAIRFGSSTIVVAIDAKKVGENKWEVYIHGGRTPTGIDAIEWAKAVESLGAGEILLTSMDKDGTKSGYDIELTKAVSEAVKIPVIASGGAGNVQHFYEAFEYGKADACLAASLFHFKEIEISELKNYLKNKGINVRL.

Residues Asp11 and Asp130 contribute to the active site.

It belongs to the HisA/HisF family. In terms of assembly, heterodimer of HisH and HisF.

The protein resides in the cytoplasm. The enzyme catalyses 5-[(5-phospho-1-deoxy-D-ribulos-1-ylimino)methylamino]-1-(5-phospho-beta-D-ribosyl)imidazole-4-carboxamide + L-glutamine = D-erythro-1-(imidazol-4-yl)glycerol 3-phosphate + 5-amino-1-(5-phospho-beta-D-ribosyl)imidazole-4-carboxamide + L-glutamate + H(+). It functions in the pathway amino-acid biosynthesis; L-histidine biosynthesis; L-histidine from 5-phospho-alpha-D-ribose 1-diphosphate: step 5/9. Its function is as follows. IGPS catalyzes the conversion of PRFAR and glutamine to IGP, AICAR and glutamate. The HisF subunit catalyzes the cyclization activity that produces IGP and AICAR from PRFAR using the ammonia provided by the HisH subunit. This Sulfurihydrogenibium sp. (strain YO3AOP1) protein is Imidazole glycerol phosphate synthase subunit HisF.